The primary structure comprises 597 residues: Cytosolic Fe-S cluster assembly factor nar1 (597 aa).

Positions 20, 61, 64, 67, 209, and 264 each coordinate [4Fe-4S] cluster. Positions 419–447 (PARASRLPGARQSATSAGGSRRQLASRNA) are disordered. Over residues 430-447 (QSATSAGGSRRQLASRNA) the composition is skewed to polar residues. [4Fe-4S] cluster is bound by residues Cys464 and Cys468. The segment at 482–504 (EAASNMSVESQTEPPEAALKPTP) is disordered. Residues 485–494 (SNMSVESQTE) are compositionally biased toward polar residues.

Belongs to the NARF family.

Its function is as follows. Component of the cytosolic Fe/S protein assembly machinery. Required for maturation of extramitochondrial Fe/S proteins. May play a role in the transfer of pre-assembled Fe/S clusters to target apoproteins. This is Cytosolic Fe-S cluster assembly factor nar1 (nar1) from Aspergillus clavatus (strain ATCC 1007 / CBS 513.65 / DSM 816 / NCTC 3887 / NRRL 1 / QM 1276 / 107).